Here is a 444-residue protein sequence, read N- to C-terminus: Glutamyl-tRNA reductase (444 aa).

Substrate is bound by residues 49–52, Ser-109, 114–116, and Gln-120; these read TCNR and ETQ. Cys-50 serves as the catalytic Nucleophile. Position 189–194 (189–194) interacts with NADP(+); it reads GAGKMG.

The protein belongs to the glutamyl-tRNA reductase family. In terms of assembly, homodimer.

The enzyme catalyses (S)-4-amino-5-oxopentanoate + tRNA(Glu) + NADP(+) = L-glutamyl-tRNA(Glu) + NADPH + H(+). It participates in porphyrin-containing compound metabolism; protoporphyrin-IX biosynthesis; 5-aminolevulinate from L-glutamyl-tRNA(Glu): step 1/2. Catalyzes the NADPH-dependent reduction of glutamyl-tRNA(Glu) to glutamate 1-semialdehyde (GSA). The protein is Glutamyl-tRNA reductase of Bacillus cereus (strain ATCC 10987 / NRS 248).